A 355-amino-acid chain; its full sequence is Peptide chain release factor 1 (355 aa).

Gln-233 is subject to N5-methylglutamine.

This sequence belongs to the prokaryotic/mitochondrial release factor family. Post-translationally, methylated by PrmC. Methylation increases the termination efficiency of RF1.

Its subcellular location is the cytoplasm. Peptide chain release factor 1 directs the termination of translation in response to the peptide chain termination codons UAG and UAA. The protein is Peptide chain release factor 1 of Syntrophobacter fumaroxidans (strain DSM 10017 / MPOB).